Reading from the N-terminus, the 274-residue chain is ATP synthase subunit a (274 aa).

A run of 5 helical transmembrane segments spans residues 43-63 (TLNI…LYVF), 103-123 (VIAP…VMDL), 144-164 (VVPT…FVLI), 223-243 (LIFI…LSLP), and 245-265 (AIFH…LTIV).

The protein belongs to the ATPase A chain family. In terms of assembly, F-type ATPases have 2 components, CF(1) - the catalytic core - and CF(0) - the membrane proton channel. CF(1) has five subunits: alpha(3), beta(3), gamma(1), delta(1), epsilon(1). CF(0) has three main subunits: a(1), b(2) and c(9-12). The alpha and beta chains form an alternating ring which encloses part of the gamma chain. CF(1) is attached to CF(0) by a central stalk formed by the gamma and epsilon chains, while a peripheral stalk is formed by the delta and b chains.

Its subcellular location is the cell inner membrane. In terms of biological role, key component of the proton channel; it plays a direct role in the translocation of protons across the membrane. The sequence is that of ATP synthase subunit a from Photorhabdus laumondii subsp. laumondii (strain DSM 15139 / CIP 105565 / TT01) (Photorhabdus luminescens subsp. laumondii).